The following is a 132-amino-acid chain: MSEDKMDLYLQQGMYGPLETKPDERHLFLGSLRERVVLALTKGQVLRSKPYKEAEHELKNSHNVTLLINGELQYQSYSSYIQMASRYGVPFKIVSDLQFHTPLGIVIAADIAVNRELIYIQDDIYNRSVLKS.

This is an uncharacterized protein from Bacillus subtilis (strain 168).